We begin with the raw amino-acid sequence, 397 residues long: MLLETGLERDRARPGAAAVCTLGGTREIPLCAGCDQHILDRFILKALDRHWHSKCLKCSDCHTPLAERCFSRGESVYCKDDFFKRFGTKCAACQLGIPPTQVVRRAQDFVYHLHCFACVVCKRQLATGDEFYLMEDSRLVCKADYETAKQREAEATAKRPRTTITAKQLETLKSAYNTSPKPARHVREQLSSETGLDMRVVQVWFQNRRAKEKRLKKDAGRQRWGQYFRNMKRSRGGSKSDKDSVQEGQDSDAEVSFPDEPSLAEMGPANGLYGSLGEPTQALGRPSGALGNFSLEHGGLAGPEQYRELRPGSPYGVPPSPAAPQSLPGPQPLLSSLVYPDTSLGLVPSGAPGGPPPMRVLAGNGPSSDLSTGSSGGYPDFPASPASWLDEVDHAQF.

LIM zinc-binding domains lie at 31–81 (CAGC…CKDD) and 90–144 (CAAC…CKAD). Thr-63 is modified (phosphothreonine). At Ser-71 the chain carries Phosphoserine. Residues 157 to 216 (AKRPRTTITAKQLETLKSAYNTSPKPARHVREQLSSETGLDMRVVQVWFQNRRAKEKRLK) constitute a DNA-binding region (homeobox). Positions 212-397 (EKRLKKDAGR…WLDEVDHAQF (186 aa)) are disordered. Tyr-227 carries the post-translational modification Phosphotyrosine. 2 positions are modified to phosphoserine: Ser-234 and Ser-238. Residues 316-331 (GVPPSPAAPQSLPGPQ) show a composition bias toward pro residues.

In terms of assembly, interacts with POU1F1. At neuronal promoters, interacts with LDB1, in motor neurons LDB1 is displaced by ISL1 and a ternary complex is formed in which ISL1 contacts both LHX3 and LDB1; allosteric structural changes in the DNA binding domain of LHX3, induced by the ISL1-LHX3 interaction, may explain differences in sequence specificity of the different complexes. Interacts with LDB2. May interact with CITED2/MRG1.

Its subcellular location is the nucleus. In terms of biological role, transcription factor. Recognizes and binds to the consensus sequence motif 5'-AATTAATTA-3' in the regulatory elements of target genes, such as glycoprotein hormones alpha chain CGA and visual system homeobox CHX10, positively modulating transcription; transcription can be co-activated by LDB2. Synergistically enhances transcription from the prolactin promoter in cooperation with POU1F1/Pit-1. Required for the establishment of the specialized cells of the pituitary gland and the nervous system. Involved in the development of interneurons and motor neurons in cooperation with LDB1 and ISL1. This chain is LIM/homeobox protein Lhx3 (LHX3), found in Homo sapiens (Human).